We begin with the raw amino-acid sequence, 402 residues long: GPI mannosyltransferase 1 (402 aa).

Transmembrane regions (helical) follow at residues 5 to 25 (VILL…YGIF), 79 to 99 (WIHM…VMII), 108 to 128 (LTKQ…ITIS), 162 to 182 (LSIH…IYLL), 191 to 211 (IWRL…PTYF), 238 to 258 (FSIW…SQSI), 260 to 280 (LSKL…YLLW), 309 to 329 (QYFI…TITW), 333 to 353 (VVCI…AYLL), and 365 to 385 (LFFG…VFIT).

Belongs to the PIGM family.

It is found in the endoplasmic reticulum membrane. It functions in the pathway glycolipid biosynthesis; glycosylphosphatidylinositol-anchor biosynthesis. Functionally, mannosyltransferase involved in glycosylphosphatidylinositol-anchor biosynthesis. Transfers the first alpha-1,4-mannose to GlcN-acyl-PI during GPI precursor assembly. Required for cell wall integrity. This Kluyveromyces lactis (strain ATCC 8585 / CBS 2359 / DSM 70799 / NBRC 1267 / NRRL Y-1140 / WM37) (Yeast) protein is GPI mannosyltransferase 1 (GPI14).